A 356-amino-acid polypeptide reads, in one-letter code: MSAVGRLAAVSLAQVRGALCGALLGDCMGAEFEGSDAVELPDVLEFVRLLEKEKKAGTLFYTDDTAMTRAVIQSLIAKPDFDEVDMAKRFAEEYKKEPTRGYGAGVVQVFKKLLSPKYSDVFQPAREQFDGKGSYGNGGAMRVASIALAYPNIQDVIKFARRSAQLTHASPLGYNGAILQALAVHFALQGELKRDTFLEQLIGEMERIEGGEMSASDAGEHDRPNEVKLPFCSRLKKIKEFLASSNVPKADIVDELGHGIAALESVPTAIYSFLHCMESDPDIPDLYNNLQRTIIYSISLGGDTDTIATMAGAIAGAYYGMDQVTPSWKRSCEAIVETEESAVKLYELYCKQLKTP.

The Mg(2+) site is built by Asp-26, Glu-33, Thr-62, Asp-63, and Asp-64. Position 63 (Asp-63) interacts with substrate. Substrate contacts are provided by residues 132 to 138, His-168, and Ile-260; that span reads KGSYGNG. Asp-303, Asp-305, and Thr-306 together coordinate Mg(2+).

Belongs to the ADP-ribosylglycohydrolase family. Monomer. Requires Mg(2+) as cofactor. Mn(2+) is required as a cofactor.

It is found in the nucleus. It localises to the cytoplasm. The protein localises to the chromosome. The protein resides in the mitochondrion matrix. It catalyses the reaction [(1''-&gt;2')-ADP-alpha-D-ribose](n) + H2O = [(1''-&gt;2')-ADP-alpha-D-ribose](n-1) + ADP-D-ribose. The catalysed reaction is 1''-O-acetyl-ADP-alpha-D-ribose + H2O = ADP-D-ribose + acetate + H(+). It carries out the reaction O-(ADP-D-ribosyl)-L-seryl-[protein] + H2O = ADP-D-ribose + L-seryl-[protein]. The enzyme catalyses alpha-NAD(+) + H2O = ADP-D-ribose + nicotinamide + H(+). With respect to regulation, the protein undergoes a dramatic conformational switch from closed to open states upon substrate-binding, which enables specific substrate recognition for the 1''-O-linkage. The glutamate flap (Glu-33) blocks substrate entrance to Mg(2+) in the unliganded closed state. In presence of substrate, Glu-33 is ejected from the active site: this closed-to-open transition significantly widens the substrate-binding channel and precisely positions the scissile 1''-O-linkage for cleavage while securing tightly 2'- and 3'-hydroxyls of ADP-ribose. Activity is inhibited by calcium. Functionally, ADP-ribosylhydrolase that preferentially hydrolyzes the scissile alpha-O-linkage attached to the anomeric C1'' position of ADP-ribose and acts on different substrates, such as proteins ADP-ribosylated on serine and threonine, free poly(ADP-ribose) and O-acetyl-ADP-D-ribose. Specifically acts as a serine mono-ADP-ribosylhydrolase by mediating the removal of mono-ADP-ribose attached to serine residues on proteins, thereby playing a key role in DNA damage response. Serine ADP-ribosylation of proteins constitutes the primary form of ADP-ribosylation of proteins in response to DNA damage. Does not hydrolyze ADP-ribosyl-arginine, -cysteine, -diphthamide, or -asparagine bonds. Also able to degrade protein free poly(ADP-ribose), which is synthesized in response to DNA damage: free poly(ADP-ribose) acts as a potent cell death signal and its degradation by ADPRHL2 protects cells from poly(ADP-ribose)-dependent cell death, a process named parthanatos. Also hydrolyzes free poly(ADP-ribose) in mitochondria. Specifically digests O-acetyl-ADP-D-ribose, a product of deacetylation reactions catalyzed by sirtuins. Specifically degrades 1''-O-acetyl-ADP-D-ribose isomer, rather than 2''-O-acetyl-ADP-D-ribose or 3''-O-acetyl-ADP-D-ribose isomers. The protein is ADP-ribosylhydrolase ARH3 (adprs) of Latimeria chalumnae (Coelacanth).